A 513-amino-acid chain; its full sequence is GMP synthase [glutamine-hydrolyzing] (513 aa).

The Glutamine amidotransferase type-1 domain occupies 9–198 (LILVLDFGSQ…VRRVCDCIGE (190 aa)). Cysteine 86 acts as the Nucleophile in catalysis. Residues histidine 172 and glutamate 174 contribute to the active site. A GMPS ATP-PPase domain is found at 199–388 (WSMENFIEIE…LGIPEHLVWR (190 aa)). An ATP-binding site is contributed by 226–232 (SGGVDSS).

In terms of assembly, homodimer.

The catalysed reaction is XMP + L-glutamine + ATP + H2O = GMP + L-glutamate + AMP + diphosphate + 2 H(+). It participates in purine metabolism; GMP biosynthesis; GMP from XMP (L-Gln route): step 1/1. Catalyzes the synthesis of GMP from XMP. This Staphylococcus saprophyticus subsp. saprophyticus (strain ATCC 15305 / DSM 20229 / NCIMB 8711 / NCTC 7292 / S-41) protein is GMP synthase [glutamine-hydrolyzing].